The chain runs to 329 residues: D-threo-aldose 1-dehydrogenase (329 aa).

Tyr58 acts as the Proton donor in catalysis. A substrate-binding site is contributed by His145.

The protein belongs to the aldo/keto reductase family.

The catalysed reaction is a D-threo-aldose + NAD(+) = a D-threo-aldono-1,5-lactone + NADH + H(+). Inhibited strongly by Hg(2+), Cd(2+) and para-chloromercuribenzoic acid (PCMB) and weakly by Zn(2+) and iodoacetamide. Also inhibited strongly by L-xylose but not D-glucose. Catalyzes the oxidation of L-fucose to L-fuconolactone in the presence of NADP(+). Also active against L-galactose and, to a much lesser degree, D-arabinose. Uses NADP(+) as a hydrogen acceptor much more efficiently than NAD(+). The protein is D-threo-aldose 1-dehydrogenase of Pseudomonas sp.